We begin with the raw amino-acid sequence, 223 residues long: Ribonuclease T (223 aa).

Positions 20-194 constitute an Exonuclease domain; that stretch reads VVIDVETAGF…YDTERTAELF (175 aa). Residues Asp-23, Glu-25, His-181, and Asp-186 each contribute to the Mg(2+) site. His-181 acts as the Proton donor/acceptor in catalysis.

It belongs to the RNase T family. In terms of assembly, homodimer. Requires Mg(2+) as cofactor.

In terms of biological role, trims short 3' overhangs of a variety of RNA species, leaving a one or two nucleotide 3' overhang. Responsible for the end-turnover of tRNA: specifically removes the terminal AMP residue from uncharged tRNA (tRNA-C-C-A). Also appears to be involved in tRNA biosynthesis. The sequence is that of Ribonuclease T from Shewanella sp. (strain W3-18-1).